Reading from the N-terminus, the 393-residue chain is NAD(P)H-quinone oxidoreductase subunit H, chloroplastic (393 aa).

It belongs to the complex I 49 kDa subunit family. As to quaternary structure, NDH is composed of at least 16 different subunits, 5 of which are encoded in the nucleus.

Its subcellular location is the plastid. The protein resides in the chloroplast thylakoid membrane. The catalysed reaction is a plastoquinone + NADH + (n+1) H(+)(in) = a plastoquinol + NAD(+) + n H(+)(out). It carries out the reaction a plastoquinone + NADPH + (n+1) H(+)(in) = a plastoquinol + NADP(+) + n H(+)(out). Functionally, NDH shuttles electrons from NAD(P)H:plastoquinone, via FMN and iron-sulfur (Fe-S) centers, to quinones in the photosynthetic chain and possibly in a chloroplast respiratory chain. The immediate electron acceptor for the enzyme in this species is believed to be plastoquinone. Couples the redox reaction to proton translocation, and thus conserves the redox energy in a proton gradient. The polypeptide is NAD(P)H-quinone oxidoreductase subunit H, chloroplastic (Gossypium barbadense (Sea Island cotton)).